The following is a 274-amino-acid chain: Nitrogenase iron protein (274 aa).

8–15 contributes to the ATP binding site; it reads GKGGIGKS. Cysteine 94 is a [4Fe-4S] cluster binding site. An ADP-ribosylarginine; by dinitrogenase reductase ADP-ribosyltransferase modification is found at arginine 97. Cysteine 131 contributes to the [4Fe-4S] cluster binding site.

The protein belongs to the NifH/BchL/ChlL family. Homodimer. [4Fe-4S] cluster is required as a cofactor. Post-translationally, the reversible ADP-ribosylation of Arg-97 inactivates the nitrogenase reductase and regulates nitrogenase activity.

It catalyses the reaction N2 + 8 reduced [2Fe-2S]-[ferredoxin] + 16 ATP + 16 H2O = H2 + 8 oxidized [2Fe-2S]-[ferredoxin] + 2 NH4(+) + 16 ADP + 16 phosphate + 6 H(+). The key enzymatic reactions in nitrogen fixation are catalyzed by the nitrogenase complex, which has 2 components: the iron protein and the molybdenum-iron protein. In Chlorobium luteolum (strain DSM 273 / BCRC 81028 / 2530) (Pelodictyon luteolum), this protein is Nitrogenase iron protein.